We begin with the raw amino-acid sequence, 625 residues long: Probable potassium transport system protein Kup (625 aa).

The next 12 helical transmembrane spans lie at 13–33 (TALAALGVVFGDIGTSPLYAL), 53–73 (ILSIIFWCLMLIISIKYVAIV), 103–123 (IYMIAIGFIGASLFFGDGIIT), 141–161 (VFDPFIMPIAIAIIVTLFLVQ), 172–192 (FGPITLVWFLSLGILGIHSVI), 206–226 (AIQFIYHHPIMTFFVMGAVVL), 250–270 (WFFVVLPCLVLNYAGQGALLL), 282–302 (LLVPQWALYPMIIMATMATVI), 340–360 (IYVPFLNWLLLIAIIILILIF), 369–389 (AYGLAVTLTMLCDTILVAVFI), 400–420 (VLLLIIPFFILESVLVGATSL), and 422–442 (ILSGGWVPLLIGAIAVTILMT).

This sequence belongs to the HAK/KUP transporter (TC 2.A.72) family.

The protein localises to the cell inner membrane. It catalyses the reaction K(+)(in) + H(+)(in) = K(+)(out) + H(+)(out). In terms of biological role, transport of potassium into the cell. Likely operates as a K(+):H(+) symporter. This Acinetobacter baumannii (strain ACICU) protein is Probable potassium transport system protein Kup.